The following is a 276-amino-acid chain: CTD small phosphatase-like protein (276 aa).

Residues 1–25 (MDGPAIITQVTNPKEDEGRLPGAGE) form a disordered region. Residues 102-260 (LDYGKKCVVI…LDLIPFFEGL (159 aa)) form the FCP1 homology domain. Asp112 acts as the 4-aspartylphosphate intermediate in catalysis. Residues Asp112, Asp114, and Asn223 each contribute to the Mg(2+) site. The active-site Proton donor is the Asp114.

As to quaternary structure, interacts with REST. Monomer. It depends on Mg(2+) as a cofactor. As to expression, expression is restricted to non-neuronal tissues.

It localises to the nucleus. The enzyme catalyses O-phospho-L-seryl-[protein] + H2O = L-seryl-[protein] + phosphate. It catalyses the reaction O-phospho-L-threonyl-[protein] + H2O = L-threonyl-[protein] + phosphate. Functionally, recruited by REST to neuronal genes that contain RE-1 elements, leading to neuronal gene silencing in non-neuronal cells. Preferentially catalyzes the dephosphorylation of 'Ser-5' within the tandem 7 residue repeats in the C-terminal domain (CTD) of the largest RNA polymerase II subunit POLR2A. Negatively regulates RNA polymerase II transcription, possibly by controlling the transition from initiation/capping to processive transcript elongation. The chain is CTD small phosphatase-like protein (CTDSPL) from Homo sapiens (Human).